Here is a 95-residue protein sequence, read N- to C-terminus: Cytochrome b (95 aa).

3 helical membrane passes run 1–16 (GLCL…FLAM), 40–61 (WLIR…YLHI), and 76–95 (WNIG…VGYV). Positions 46 and 60 each coordinate heme b.

Belongs to the cytochrome b family. The cytochrome bc1 complex contains 3 respiratory subunits (MT-CYB, CYC1 and UQCRFS1), 2 core proteins (UQCRC1 and UQCRC2) and probably 6 low-molecular weight proteins. Heme b serves as cofactor.

Its subcellular location is the mitochondrion inner membrane. Component of the ubiquinol-cytochrome c reductase complex (complex III or cytochrome b-c1 complex) that is part of the mitochondrial respiratory chain. The b-c1 complex mediates electron transfer from ubiquinol to cytochrome c. Contributes to the generation of a proton gradient across the mitochondrial membrane that is then used for ATP synthesis. The sequence is that of Cytochrome b (mt-cyb) from Gomphosus varius (Bird wrasse).